We begin with the raw amino-acid sequence, 625 residues long: Phosphomethylpyrimidine synthase (625 aa).

Substrate contacts are provided by residues Asn231, Met260, Tyr289, His325, 345-347 (SRG), 386-389 (DGLR), and Glu425. A Zn(2+)-binding site is contributed by His429. Position 452 (Tyr452) interacts with substrate. His493 provides a ligand contact to Zn(2+). [4Fe-4S] cluster contacts are provided by Cys573, Cys576, and Cys581.

The protein belongs to the ThiC family. Homodimer. Requires [4Fe-4S] cluster as cofactor.

It carries out the reaction 5-amino-1-(5-phospho-beta-D-ribosyl)imidazole + S-adenosyl-L-methionine = 4-amino-2-methyl-5-(phosphooxymethyl)pyrimidine + CO + 5'-deoxyadenosine + formate + L-methionine + 3 H(+). It participates in cofactor biosynthesis; thiamine diphosphate biosynthesis. Its function is as follows. Catalyzes the synthesis of the hydroxymethylpyrimidine phosphate (HMP-P) moiety of thiamine from aminoimidazole ribotide (AIR) in a radical S-adenosyl-L-methionine (SAM)-dependent reaction. The chain is Phosphomethylpyrimidine synthase from Acinetobacter baumannii (strain AB0057).